The chain runs to 334 residues: MSDALIAPNASSSEAPQSPAEHYDPTRKQKSADKTARIPIKIVPAEKLKKPDWIRVKAATGNSRFYEIKDILRANNLVTVCEEASCPNIGECFGKGTATFMIMGDKCTRRCPFCDVGHGRPDPLDVNEPGNLARTIAQLKLNYVVITSVDRDDLRDGGAQHYVDCISQTRELSPATRIEVLVPDFRGRLDKALDILQACPPDVMNHNMETVPRLYKQARPGADYAHSLKLLQEFKRRNPNVPTKSGLMVGLGETDEEILEVMRDMRAHDIDMLTIGQYLAPSNHHLPVLRYVHPDTFKMFEEEAYKMGFTHAAVGAMVRSSYHADQQAHQAGFA.

The interval methionine 1–alanine 36 is disordered. The segment covering alanine 7–alanine 20 has biased composition (low complexity). Basic and acidic residues predominate over residues glutamate 21–alanine 36. Positions 81, 86, 92, 107, 111, 114, and 321 each coordinate [4Fe-4S] cluster. Residues cysteine 92 to threonine 310 form the Radical SAM core domain.

The protein belongs to the radical SAM superfamily. Lipoyl synthase family. Requires [4Fe-4S] cluster as cofactor.

The protein localises to the cytoplasm. It catalyses the reaction [[Fe-S] cluster scaffold protein carrying a second [4Fe-4S](2+) cluster] + N(6)-octanoyl-L-lysyl-[protein] + 2 oxidized [2Fe-2S]-[ferredoxin] + 2 S-adenosyl-L-methionine + 4 H(+) = [[Fe-S] cluster scaffold protein] + N(6)-[(R)-dihydrolipoyl]-L-lysyl-[protein] + 4 Fe(3+) + 2 hydrogen sulfide + 2 5'-deoxyadenosine + 2 L-methionine + 2 reduced [2Fe-2S]-[ferredoxin]. It participates in protein modification; protein lipoylation via endogenous pathway; protein N(6)-(lipoyl)lysine from octanoyl-[acyl-carrier-protein]: step 2/2. Functionally, catalyzes the radical-mediated insertion of two sulfur atoms into the C-6 and C-8 positions of the octanoyl moiety bound to the lipoyl domains of lipoate-dependent enzymes, thereby converting the octanoylated domains into lipoylated derivatives. The sequence is that of Lipoyl synthase from Cupriavidus taiwanensis (strain DSM 17343 / BCRC 17206 / CCUG 44338 / CIP 107171 / LMG 19424 / R1) (Ralstonia taiwanensis (strain LMG 19424)).